A 654-amino-acid chain; its full sequence is Probable Xaa-Pro aminopeptidase P (654 aa).

Mn(2+) contacts are provided by Asp-449, Asp-460, Glu-558, and Glu-572.

It belongs to the peptidase M24B family. The cofactor is Mn(2+).

The catalysed reaction is Release of any N-terminal amino acid, including proline, that is linked to proline, even from a dipeptide or tripeptide.. Functionally, catalyzes the removal of a penultimate prolyl residue from the N-termini of peptides. This is Probable Xaa-Pro aminopeptidase P (ampp) from Aspergillus flavus (strain ATCC 200026 / FGSC A1120 / IAM 13836 / NRRL 3357 / JCM 12722 / SRRC 167).